Reading from the N-terminus, the 204-residue chain is Small rubber particle protein (204 aa).

This sequence belongs to the REF/SRPP family. Auto-assembles in solution into stable nanomultimers of a globular nature. In terms of processing, not glycosylated. The N-terminus is blocked. Post-translationally, consistent shifts of about 266 Da observed by MS in various forms of the intact protein suggest the addition of stearolyl groups. Highly expressed in the specialized vessel laticifers, but localized only in the laticifer layers in the conducting phloem. Also detected in leaves.

The protein localises to the cytoplasm. In terms of biological role, involved in the biosynthesis of rubber, an isoprenoid polymer (cis-1,4-polyisoprene). The sequence is that of Small rubber particle protein from Hevea brasiliensis (Para rubber tree).